A 234-amino-acid polypeptide reads, in one-letter code: Rhodanese-like domain-containing protein 9, chloroplastic (234 aa).

A chloroplast-targeting transit peptide spans M1–A47. The 124-residue stretch at A62–G185 folds into the Rhodanese domain. Catalysis depends on C145, which acts as the Cysteine persulfide intermediate. The helical transmembrane segment at I204 to F222 threads the bilayer.

The protein resides in the plastid. The protein localises to the chloroplast. It is found in the membrane. The protein is Rhodanese-like domain-containing protein 9, chloroplastic (STR9) of Arabidopsis thaliana (Mouse-ear cress).